Consider the following 292-residue polypeptide: NAD kinase (292 aa).

Catalysis depends on aspartate 73, which acts as the Proton acceptor. NAD(+) is bound by residues 73-74 (DG), 147-148 (NE), histidine 158, arginine 175, aspartate 177, 188-193 (TAYSLS), and glutamine 247.

The protein belongs to the NAD kinase family. It depends on a divalent metal cation as a cofactor.

The protein resides in the cytoplasm. It carries out the reaction NAD(+) + ATP = ADP + NADP(+) + H(+). Functionally, involved in the regulation of the intracellular balance of NAD and NADP, and is a key enzyme in the biosynthesis of NADP. Catalyzes specifically the phosphorylation on 2'-hydroxyl of the adenosine moiety of NAD to yield NADP. The polypeptide is NAD kinase (Salmonella dublin (strain CT_02021853)).